Here is a 415-residue protein sequence, read N- to C-terminus: Calcium/calmodulin-dependent serine/threonine-protein kinase (415 aa).

Positions 12–308 (YEISEILGRG…AQELLDHPWV (297 aa)) constitute a Protein kinase domain. Residues 18–26 (LGRGGFSVV) and Lys46 contribute to the ATP site. The active-site Proton acceptor is Asp173. The interval 318–328 (MDAEIVSRLQS) is calmodulin-binding.

This sequence belongs to the protein kinase superfamily. CAMK Ser/Thr protein kinase family. CaMK subfamily.

It catalyses the reaction L-seryl-[protein] + ATP = O-phospho-L-seryl-[protein] + ADP + H(+). The catalysed reaction is L-threonyl-[protein] + ATP = O-phospho-L-threonyl-[protein] + ADP + H(+). Functionally, may be involved in signal transduction processes. The protein is Calcium/calmodulin-dependent serine/threonine-protein kinase of Malus domestica (Apple).